Reading from the N-terminus, the 238-residue chain is Ribonuclease PH (238 aa).

Residues Arg-86 and 124-126 (GTR) contribute to the phosphate site.

It belongs to the RNase PH family. As to quaternary structure, homohexameric ring arranged as a trimer of dimers.

It catalyses the reaction tRNA(n+1) + phosphate = tRNA(n) + a ribonucleoside 5'-diphosphate. Functionally, phosphorolytic 3'-5' exoribonuclease that plays an important role in tRNA 3'-end maturation. Removes nucleotide residues following the 3'-CCA terminus of tRNAs; can also add nucleotides to the ends of RNA molecules by using nucleoside diphosphates as substrates, but this may not be physiologically important. Probably plays a role in initiation of 16S rRNA degradation (leading to ribosome degradation) during starvation. This chain is Ribonuclease PH, found in Histophilus somni (strain 129Pt) (Haemophilus somnus).